A 284-amino-acid polypeptide reads, in one-letter code: NAD kinase (284 aa).

The Proton acceptor role is filled by aspartate 71. NAD(+) contacts are provided by residues 71 to 72, 144 to 145, aspartate 174, 185 to 190, and glutamine 242; these read DG, ND, and TAYNLS.

The protein belongs to the NAD kinase family. The cofactor is a divalent metal cation.

Its subcellular location is the cytoplasm. The enzyme catalyses NAD(+) + ATP = ADP + NADP(+) + H(+). Its function is as follows. Involved in the regulation of the intracellular balance of NAD and NADP, and is a key enzyme in the biosynthesis of NADP. Catalyzes specifically the phosphorylation on 2'-hydroxyl of the adenosine moiety of NAD to yield NADP. This is NAD kinase from Sulfurimonas denitrificans (strain ATCC 33889 / DSM 1251) (Thiomicrospira denitrificans (strain ATCC 33889 / DSM 1251)).